Reading from the N-terminus, the 477-residue chain is Bifunctional protein HldE (477 aa).

The tract at residues 1–318 (MKVTLPEFER…ENAVRGRADT (318 aa)) is ribokinase. K179 is modified (N6-acetyllysine). 195-198 (NLSE) serves as a coordination point for ATP. D264 is a catalytic residue. Residues 344-477 (MTNGVFDILH…IKKIQQDKKG (134 aa)) form a cytidylyltransferase region.

In the N-terminal section; belongs to the carbohydrate kinase PfkB family. The protein in the C-terminal section; belongs to the cytidylyltransferase family. In terms of assembly, homodimer.

The catalysed reaction is D-glycero-beta-D-manno-heptose 7-phosphate + ATP = D-glycero-beta-D-manno-heptose 1,7-bisphosphate + ADP + H(+). The enzyme catalyses D-glycero-beta-D-manno-heptose 1-phosphate + ATP + H(+) = ADP-D-glycero-beta-D-manno-heptose + diphosphate. It functions in the pathway nucleotide-sugar biosynthesis; ADP-L-glycero-beta-D-manno-heptose biosynthesis; ADP-L-glycero-beta-D-manno-heptose from D-glycero-beta-D-manno-heptose 7-phosphate: step 1/4. Its pathway is nucleotide-sugar biosynthesis; ADP-L-glycero-beta-D-manno-heptose biosynthesis; ADP-L-glycero-beta-D-manno-heptose from D-glycero-beta-D-manno-heptose 7-phosphate: step 3/4. In terms of biological role, catalyzes the phosphorylation of D-glycero-D-manno-heptose 7-phosphate at the C-1 position to selectively form D-glycero-beta-D-manno-heptose-1,7-bisphosphate. Its function is as follows. Catalyzes the ADP transfer from ATP to D-glycero-beta-D-manno-heptose 1-phosphate, yielding ADP-D-glycero-beta-D-manno-heptose. This chain is Bifunctional protein HldE, found in Shigella sonnei (strain Ss046).